A 104-amino-acid polypeptide reads, in one-letter code: Circadian clock oscillator protein KaiB (104 aa).

This sequence belongs to the KaiB family. In terms of assembly, the KaiABC complex composition changes during the circadian cycle to control KaiC phosphorylation. Complexes KaiC(6), KaiA(2-4):KaiC(6), KaiB(6):KaiC(6) and KaiC(6):KaiB(6):KaiA(12) are among the most important forms, many form cooperatively. Undergoes a major conformational rearrangment; in the free state forms homotetramers as a dimer of dimers. When bound to the CI domain of KaiC switches to a monomeric thioredoxin-fold (KaiB(fs)). KaiB(fs) binds CikA, leading it to dephosphorylate phospho-RpaA.

Its function is as follows. Key component of the KaiABC oscillator complex, which constitutes the main circadian regulator in cyanobacteria. Complex composition changes during the circadian cycle to control KaiC phosphorylation. KaiA stimulates KaiC autophosphorylation, while KaiB sequesters KaiA, leading to KaiC autodephosphorylation. Phospho-Ser-431 KaiC accumulation triggers binding of KaiB to form the KaiB(6):KaiC(6) complex, leading to changes in output regulators CikA and SasA. KaiB switches to a thioredoxin-like fold (KaiB(fs)) when bound to KaiC. KaiB(6):KaiC(6) formation exposes a site for KaiA binding that sequesters KaiA from KaiC, making the KaiC(6):KaiB(6):KaiA(12) complex that results in KaiC autodephosphorylation. Functionally, a metamorphic protein which reversibly switches between an inactive tetrameric fold and a rare, thioredoxin-like monomeric fold (KaiB(fs)). KaiB(fs) binds phospho-KaiC, KaiA and CikA. KaiA and CikA compete for binding to KaiB(fs), and KaiB(fs) and SasA compete for binding to KaiC, thus the clock oscillator and output signal pathway are tightly coupled. This chain is Circadian clock oscillator protein KaiB, found in Trichodesmium erythraeum (strain IMS101).